The primary structure comprises 247 residues: ATP synthase subunit a, chloroplastic (247 aa).

5 helical membrane passes run 36-56 (GQVLMTSWFVFAVIAILSIAG), 95-115 (IPFLGTLFLFIFVSNWSGALI), 134-154 (INTTVALALLTSTAYFYAGFS), 199-219 (LVVGVLVALVPLVVPIPIMLL), and 220-240 (GLFTSGIQALVFATLAGAYIG).

The protein belongs to the ATPase A chain family. As to quaternary structure, F-type ATPases have 2 components, CF(1) - the catalytic core - and CF(0) - the membrane proton channel. CF(1) has five subunits: alpha(3), beta(3), gamma(1), delta(1), epsilon(1). CF(0) has four main subunits: a, b, b' and c.

It localises to the plastid. The protein localises to the chloroplast thylakoid membrane. Functionally, key component of the proton channel; it plays a direct role in the translocation of protons across the membrane. This Tupiella akineta (Green alga) protein is ATP synthase subunit a, chloroplastic.